A 1025-amino-acid chain; its full sequence is Putative calcium-transporting ATPase 11, plasma membrane-type (1025 aa).

Residues 1-157 (MSNLLKDFEV…NRYTEKPARS (157 aa)) are Cytoplasmic-facing. The interaction with calmodulin stretch occupies residues 19-30 (ARQRWRSSVGLV). Residues 158 to 178 (FLTFVWEALQDITLIILMVCA) traverse the membrane as a helical segment. Over 179–196 (VVSIGVGVATEGFPKGMY) the chain is Lumenal. Residues 197 to 217 (DGTGILLSIILVVMVTAISDY) form a helical membrane-spanning segment. The Cytoplasmic portion of the chain corresponds to 218–345 (KQSLQFRDLD…EDETPLQVKL (128 aa)). Residues 346-365 (NGVATIIGKIGLGFAVLTFV) traverse the membrane as a helical segment. Residues 366-395 (VLCIRFVVEKATAGSITEWSSEDALTLLDY) are Lumenal-facing. Residues 396–413 (FAIAVTIIVVAVPEGLPL) traverse the membrane as a helical segment. Residues 414-801 (AVTLSLAFAM…KWGRAVYINI (388 aa)) lie on the Cytoplasmic side of the membrane. Asp451 functions as the 4-aspartylphosphate intermediate in the catalytic mechanism. Residues Asp746 and Asp750 each coordinate Mg(2+). Residues 802–820 (QKFVQFQLTVNVVALIINF) traverse the membrane as a helical segment. The Lumenal portion of the chain corresponds to 821 to 831 (VSACITGSAPL). The helical transmembrane segment at 832-852 (TAVQLLWVNMIMDTLGALALA) threads the bilayer. The Cytoplasmic segment spans residues 853-872 (TEPPNEGLMKRQPIGRTASF). A helical transmembrane segment spans residues 873-895 (ITRAMWRNIIGQSIYQLIVLGIL). Residues 896–907 (NFAGKQILNLNG) lie on the Lumenal side of the membrane. The helical transmembrane segment at 908–929 (PDSTIVLNTIIFNSFVFCQVFN) threads the bilayer. Topologically, residues 930–947 (EVNSREIEKINVFEGMFK) are cytoplasmic. The chain crosses the membrane as a helical span at residues 948–969 (SWVFVAVMTATVGFQVIIVEFL). Over 970–979 (GAFASTVPLS) the chain is Lumenal. A helical membrane pass occupies residues 980 to 1001 (WQHWLLCILIGSVSMILAVGLK). The Cytoplasmic portion of the chain corresponds to 1002 to 1025 (CIPVESNRHHDGYELLPSGPSDSA).

This sequence belongs to the cation transport ATPase (P-type) (TC 3.A.3) family. Type IIB subfamily.

Its subcellular location is the membrane. It carries out the reaction Ca(2+)(in) + ATP + H2O = Ca(2+)(out) + ADP + phosphate + H(+). With respect to regulation, activated by calmodulin. Its function is as follows. This magnesium-dependent enzyme catalyzes the hydrolysis of ATP coupled with the translocation of calcium from the cytosol out of the cell or into organelles. In Arabidopsis thaliana (Mouse-ear cress), this protein is Putative calcium-transporting ATPase 11, plasma membrane-type (ACA11).